Here is a 303-residue protein sequence, read N- to C-terminus: E3 ubiquitin-protein ligase SINA-like 3 (303 aa).

The disordered stretch occupies residues 1–30 (MENITNNSERSLDRPKRQRPVSMENVGGTA). The RING-type zinc finger occupies 49 to 85 (CPICYHKLGAPIYQCDNGHIACSSCCKKVKYKCPYCS). Residues 99-286 (IVEAVVVSCP…MSIPYYLLDE (188 aa)) form an SBD region. An SIAH-type zinc finger spans residues 102 to 162 (AVVVSCPNAK…LYRHYHAEHK (61 aa)). Zn(2+) is bound by residues Cys107, Cys114, His128, Cys132, Cys139, Cys144, His156, and His161.

This sequence belongs to the SINA (Seven in absentia) family.

It catalyses the reaction S-ubiquitinyl-[E2 ubiquitin-conjugating enzyme]-L-cysteine + [acceptor protein]-L-lysine = [E2 ubiquitin-conjugating enzyme]-L-cysteine + N(6)-ubiquitinyl-[acceptor protein]-L-lysine.. Its pathway is protein modification; protein ubiquitination. In terms of biological role, E3 ubiquitin-protein ligase that mediates ubiquitination and subsequent proteasomal degradation of target proteins. E3 ubiquitin ligases accept ubiquitin from an E2 ubiquitin-conjugating enzyme in the form of a thioester and then directly transfers the ubiquitin to targeted substrates. It probably triggers the ubiquitin-mediated degradation of different substrates. The polypeptide is E3 ubiquitin-protein ligase SINA-like 3 (Arabidopsis thaliana (Mouse-ear cress)).